Reading from the N-terminus, the 412-residue chain is Probable tRNA sulfurtransferase (412 aa).

The segment at 1-22 is disordered; sequence MPDIFTDNTDKQDSDPSRQGFE. The 109-residue stretch at 82 to 190 folds into the THUMP domain; the sequence is PRAAEAAADV…QNLAYVYLET (109 aa). Residues 208–209, Lys292, Gly314, and Gln323 each bind ATP; that span reads LM.

It belongs to the ThiI family.

It localises to the cytoplasm. The catalysed reaction is [ThiI sulfur-carrier protein]-S-sulfanyl-L-cysteine + a uridine in tRNA + 2 reduced [2Fe-2S]-[ferredoxin] + ATP + H(+) = [ThiI sulfur-carrier protein]-L-cysteine + a 4-thiouridine in tRNA + 2 oxidized [2Fe-2S]-[ferredoxin] + AMP + diphosphate. It catalyses the reaction [ThiS sulfur-carrier protein]-C-terminal Gly-Gly-AMP + S-sulfanyl-L-cysteinyl-[cysteine desulfurase] + AH2 = [ThiS sulfur-carrier protein]-C-terminal-Gly-aminoethanethioate + L-cysteinyl-[cysteine desulfurase] + A + AMP + 2 H(+). Its pathway is cofactor biosynthesis; thiamine diphosphate biosynthesis. Its function is as follows. Catalyzes the ATP-dependent transfer of a sulfur to tRNA to produce 4-thiouridine in position 8 of tRNAs, which functions as a near-UV photosensor. Also catalyzes the transfer of sulfur to the sulfur carrier protein ThiS, forming ThiS-thiocarboxylate. This is a step in the synthesis of thiazole, in the thiamine biosynthesis pathway. The sulfur is donated as persulfide by IscS. This chain is Probable tRNA sulfurtransferase, found in Methanosarcina acetivorans (strain ATCC 35395 / DSM 2834 / JCM 12185 / C2A).